Reading from the N-terminus, the 549-residue chain is Undecaprenyl phosphate-alpha-4-amino-4-deoxy-L-arabinose arabinosyl transferase (549 aa).

The next 12 helical transmembrane spans lie at 9-29 (LLLI…GLWI), 80-100 (LFGV…LAYL), 112-132 (SLAC…SGYA), 136-156 (PQFT…LDAG), 176-196 (FLTK…PYML), 204-224 (LLGY…PWAL), 256-276 (PWWF…GLLP), 288-308 (QPPV…FSLS), 312-332 (LPTY…HALV), 346-366 (NGLL…YLQL), 376-396 (FELF…LAQW), and 402-422 (AWAA…AAMP).

Belongs to the glycosyltransferase 83 family.

It localises to the cell inner membrane. The catalysed reaction is 4-amino-4-deoxy-alpha-L-arabinopyranosyl di-trans,octa-cis-undecaprenyl phosphate + lipid IVA = lipid IIA + di-trans,octa-cis-undecaprenyl phosphate.. It functions in the pathway lipopolysaccharide metabolism; 4-amino-4-deoxy-beta-L-arabinose-lipid A biosynthesis. Catalyzes the transfer of the L-Ara4N moiety of the glycolipid undecaprenyl phosphate-alpha-L-Ara4N to lipid A. The modified arabinose is attached to lipid A and is required for resistance to polymyxin and cationic antimicrobial peptides. The protein is Undecaprenyl phosphate-alpha-4-amino-4-deoxy-L-arabinose arabinosyl transferase of Pseudomonas paraeruginosa (strain DSM 24068 / PA7) (Pseudomonas aeruginosa (strain PA7)).